Consider the following 122-residue polypeptide: Large ribosomal subunit protein uL14 (122 aa).

Belongs to the universal ribosomal protein uL14 family. As to quaternary structure, part of the 50S ribosomal subunit. Forms a cluster with proteins L3 and L19. In the 70S ribosome, L14 and L19 interact and together make contacts with the 16S rRNA in bridges B5 and B8.

In terms of biological role, binds to 23S rRNA. Forms part of two intersubunit bridges in the 70S ribosome. This Psychrobacter arcticus (strain DSM 17307 / VKM B-2377 / 273-4) protein is Large ribosomal subunit protein uL14.